The chain runs to 311 residues: Methionyl-tRNA formyltransferase (311 aa).

114 to 117 contacts (6S)-5,6,7,8-tetrahydrofolate; the sequence is SLLP.

Belongs to the Fmt family.

It carries out the reaction L-methionyl-tRNA(fMet) + (6R)-10-formyltetrahydrofolate = N-formyl-L-methionyl-tRNA(fMet) + (6S)-5,6,7,8-tetrahydrofolate + H(+). Functionally, attaches a formyl group to the free amino group of methionyl-tRNA(fMet). The formyl group appears to play a dual role in the initiator identity of N-formylmethionyl-tRNA by promoting its recognition by IF2 and preventing the misappropriation of this tRNA by the elongation apparatus. In Corynebacterium diphtheriae (strain ATCC 700971 / NCTC 13129 / Biotype gravis), this protein is Methionyl-tRNA formyltransferase.